A 719-amino-acid chain; its full sequence is NF-kappa-B inhibitor zeta (719 aa).

The span at 46 to 81 (GACDGGCSASGPSAPGSPGSDSSDFSSASSVSSCGA) shows a compositional bias: low complexity. Positions 46–97 (GACDGGCSASGPSAPGSPGSDSSDFSSASSVSSCGAVESRPRGGARAERLQV) are disordered. Residues 84-97 (SRPRGGARAERLQV) show a composition bias toward basic and acidic residues. The OCA domain occupies 108–130 (RGPFQGVRVKNSVKELLLHIRSH). The short motif at 164-179 (KRKGSDSLSDGPACKR) is the Nuclear localization signal element. Disordered regions lie at residues 188–210 (LTPPQTPTPAESMEDVHHNESKQ) and 289–343 (YSPQ…FAPL). Residues 201–210 (EDVHHNESKQ) are compositionally biased toward basic and acidic residues. The required for transcriptional activity stretch occupies residues 322–394 (SYEPHLFGRE…LARPDASSTP (73 aa)). An interaction with NFKB1/p50 region spans residues 405-719 (GGNPMSTTQL…KSIQQRAPPY (315 aa)). ANK repeat units lie at residues 444–473 (DGDTFLHIAVAQGRRALSYVLARKMNALHM), 480–509 (NGQSAFQVAVAANQHLIVQDLVTLGAQVNT), 513–542 (WGRTPLHVCAEKGHSQVLQAIQKGAAGSNQ), 552–581 (DGLTPLHCAVLAHNAVVHELQRNQQPHSPE), 583–608 (QELLLKNKSLVDTIKCLIQMGAAVEA), 613–642 (SGRTALHLAAEEANLELIRLFLELPSCLSF), and 649–682 (NGNTALHVAASLQYRVTQLDAVRLLMRKGADPST).

Interacts with NFKB1/p50. Interacts with RELA. Interacts with AKIRIN2.

The protein localises to the nucleus. Its function is as follows. Involved in regulation of NF-kappa-B transcription factor complexes. Inhibits NF-kappa-B activity without affecting its nuclear translocation upon stimulation. Inhibits DNA-binding of RELA and NFKB1/p50, and of the NF-kappa-B p65-p50 heterodimer and the NF-kappa-B p50-p50 homodimer. Also seems to activate NF-kappa-B-mediated transcription. In vitro, upon association with NFKB1/p50 has transcriptional activation activity and, together with NFKB1/p50 and RELA, is recruited to LCN2 promoters. Promotes transcription of LCN2 and DEFB4. Is recruited to IL-6 promoters and activates IL-6 but decreases TNF-alpha production in response to LPS. Seems to be involved in the induction of inflammatory genes activated through TLR/IL-1 receptor signaling. Involved in the induction of T helper 17 cells (Th17) differentiation upon recognition of antigen by T cell antigen receptor (TCR). The chain is NF-kappa-B inhibitor zeta (NFKBIZ) from Bos taurus (Bovine).